The chain runs to 341 residues: MENYYTLSGNQEGVASCYRIAEDSEGVISMWVFQRGLHSSRSVLARTRYTKPKPKPPRRSKVRAPTQTTHHDTDLKVTAPIPPAAANLECNPEHPLWQFFDGGRFMRSAEELDDKSRPWTVPELRRKSFDDLHSLWYACLKERNILAREMHLRRNMQEEGSAHAQLDERVRTTMWRIRHVLSERDWAYRLAHAELGTQQAPLLREVEEAFLAVPEAEDGEAFDMLARLQRAVFGISEYIEENLVDRRFVDGLKYIATLKLRRFAPRDAAVEQLLQASEGGITDAGEAFVIFTAENTLADVKEAADAVNELREQGNKVDRYEEIATVAQYLKKLANAKKVAA.

The interval 44-74 (LARTRYTKPKPKPPRRSKVRAPTQTTHHDTD) is disordered. The span at 48–62 (RYTKPKPKPPRRSKV) shows a compositional bias: basic residues.

The protein belongs to the universal ribosomal protein uL29 family. In terms of assembly, component of the mitochondrial large ribosomal subunit. Mature mitochondrial ribosomes consist of a small (37S) and a large (54S) subunit. The 37S subunit contains at least 33 different proteins and 1 molecule of RNA (15S). The 54S subunit contains at least 45 different proteins and 1 molecule of RNA (21S).

The protein resides in the mitochondrion. This chain is Large ribosomal subunit protein uL29m (MRPL4), found in Eremothecium gossypii (strain ATCC 10895 / CBS 109.51 / FGSC 9923 / NRRL Y-1056) (Yeast).